A 460-amino-acid polypeptide reads, in one-letter code: Muscarinic acetylcholine receptor M1 (460 aa).

The Extracellular portion of the chain corresponds to 1 to 22; it reads MNTSAPPAVSPNITVLAPGKGP. Residues asparagine 2 and asparagine 12 are each glycosylated (N-linked (GlcNAc...) asparagine). The chain crosses the membrane as a helical span at residues 23-48; sequence WQVAFIGITTGLLSLATVTGNLLVLI. The Cytoplasmic segment spans residues 49-62; it reads SFKVNTELKTVNNY. The helical transmembrane segment at 63–84 threads the bilayer; it reads FLLSLACADLIIGTFSMNLYTT. Residues 85–95 lie on the Extracellular side of the membrane; it reads YLLMGHWALGT. Residues 96 to 121 traverse the membrane as a helical segment; sequence LACDLWLALDYVASNASVMNLLLISF. Cysteine 98 and cysteine 178 are disulfide-bonded. Residues 122–142 lie on the Cytoplasmic side of the membrane; that stretch reads DRYFSVTRPLSYRAKRTPRRA. Residues 143 to 164 form a helical membrane-spanning segment; sequence ALMIGLAWLVSFVLWAPAILFW. The Extracellular segment spans residues 165-185; sequence QYLVGERTVLAGQCYIQFLSQ. A helical transmembrane segment spans residues 186–209; the sequence is PIITFGTAMAAFYLPVTVMCTLYW. The Cytoplasmic portion of the chain corresponds to 210–366; that stretch reads RIYRETESRA…LVKEKKAART (157 aa). 3 disordered regions span residues 225–256, 274–297, and 310–351; these read LQGSETPGKGGGSSSSSERSQPGAEGSPGTPP, WKEEEEEDEGSMESLTSSEGEEPG, and EAQA…QLAK. At threonine 230 the chain carries Phosphothreonine. The segment covering 238 to 247 has biased composition (low complexity); that stretch reads SSSSERSQPG. Basic residues predominate over residues 328–343; that stretch reads RPTKKGRDRAGKGQKP. The chain crosses the membrane as a helical span at residues 367-390; it reads LSAILLAFILTWTPYNIMVLVSTF. Over 391-397 the chain is Extracellular; the sequence is CKDCVPE. A helical membrane pass occupies residues 398–420; the sequence is TLWELGYWLCYVNSTINPMCYAL. Residues 421–460 lie on the Cytoplasmic side of the membrane; sequence CNKAFRDTFRLLLLCRWDKRRWRKIPKRPGSVHRTPSRQC. The residue at position 428 (threonine 428) is a Phosphothreonine. A Phosphoserine modification is found at serine 451. Threonine 455 is modified (phosphothreonine). Phosphoserine is present on serine 457.

It belongs to the G-protein coupled receptor 1 family. Muscarinic acetylcholine receptor subfamily. CHRM1 sub-subfamily. Interacts with GPRASP2. Interacts with TMEM147.

Its subcellular location is the cell membrane. The protein localises to the postsynaptic cell membrane. Its function is as follows. The muscarinic acetylcholine receptor mediates various cellular responses, including inhibition of adenylate cyclase, breakdown of phosphoinositides and modulation of potassium channels through the action of G proteins. Primary transducing effect is Pi turnover. In Pongo abelii (Sumatran orangutan), this protein is Muscarinic acetylcholine receptor M1 (CHRM1).